The sequence spans 880 residues: MSVTEPPPRRRGRHSRARRFLTSLGATAALTAGMLGVPLATGTAHAEPAFNYAEALQKSMFFYEAQRSGKLPENNRVSWRGDSGLNDGADVGLDLTGGWYDAGDHVKFGFPMAFTATMLAWGAIESPEGYIRSGQMPYLKDNLRWVNDYFIKAHPSPNVLYVQVGDGDADHKWWGPAEVMPMERPSFKVDPSCPGSDVAAETAAAMAASSIVFADDDPAYAATLVQHAKQLYTFADTYRGVYSDCVPAGAFYNSWSGYQDELVWGAYWLYKATGDDSYLAKAEYEYDFLSTEQQTDLRSYRWTIAWDDKSYGTYVLLAKETGKQKYIDDANRWLDYWTVGVNGQRVPYSPGGMAVLDTWGALRYAANTAFVALVYAKVIDDPVRKQRYHDFAVRQINYALGDNPRNSSYVVGFGNNPPRNPHHRTAHGSWTDSIASPAENRHVLYGALVGGPGSPNDAYTDDRQDYVANEVATDYNAGFSSALAMLVEEYGGTPLADFPPTEEPDGPEIFVEAQINTPGTTFTEIKAMIRNQSGWPARMLDKGTFRYWFTLDEGVDPADITVSSAYNQCATPEDVHHVSGDLYYVEIDCTGEKIFPGGQSEHRREVQFRIAGGPGWDPSNDWSFQGIGNELAPAPYIVLYDDGVPVWGTAPEEGEEPGGGEGPGGGEEPGEDVTPPSAPGSPAVRDVTSTSAVLTWSASSDTGGSGVAGYDVFLRAGTGQEQKVGSTTRTSFTLTGLEPDTTYIAAVVARDNAGNVSQRSTVSFTTLAENGGGPDASCTVGYSTNDWDSGFTASIRITYHGTAPLSSWELSFTFPAGQQVTHGWNATWRQDGAAVTATPMSWNSSLAPGATVEVGFNGSWSGSNTPPTDFTLNGEPCALA.

The first 46 residues, 1–46 (MSVTEPPPRRRGRHSRARRFLTSLGATAALTAGMLGVPLATGTAHA), serve as a signal peptide directing secretion. D104 serves as the catalytic Nucleophile. Active-site residues include H422, H427, D461, and E470. One can recognise a CBM3 domain in the interval 504-652 (PDGPEIFVEA…GVPVWGTAPE (149 aa)). The segment at 647–688 (WGTAPEEGEEPGGGEGPGGGEEPGEDVTPPSAPGSPAVRDVT) is disordered. The region spanning 678-770 (APGSPAVRDV…TVSFTTLAEN (93 aa)) is the Fibronectin type-III domain. Residues 771–880 (GGGPDASCTV…TLNGEPCALA (110 aa)) form the CBM2 domain.

It belongs to the glycosyl hydrolase 9 (cellulase E) family.

It carries out the reaction Endohydrolysis of (1-&gt;4)-beta-D-glucosidic linkages in cellulose, lichenin and cereal beta-D-glucans.. The protein operates within glycan metabolism; cellulose degradation. This is Endoglucanase E-4 (celD) from Thermobifida fusca (Thermomonospora fusca).